The following is a 663-amino-acid chain: Nuclear receptor-binding protein homolog (663 aa).

The segment covering 1–14 (MSNSQANAGSSGSA) has biased composition (low complexity). The segment at 1–112 (MSNSQANAGS…SEDESEILEE (112 aa)) is disordered. Residues 19-46 (LNPSGSATLVPNLTTTNASSQATPASTI) show a composition bias toward polar residues. Composition is skewed to low complexity over residues 47–57 (PQQQQPQQSQP) and 81–94 (VVVAGGSEGVNLDS). Residues 101–111 (DDSEDESEILE) are compositionally biased toward acidic residues. The region spanning 122–392 (REEVDQRDVP…ANDLLFHPLL (271 aa)) is the Protein kinase domain. Disordered regions lie at residues 481–505 (PNFRSRAASPERADSVKSATPEPVD) and 638–663 (YVPQDQQQYQQQQQEADVDQSGTTSN). Residues Ser-489, Ser-495, and Ser-498 each carry the phosphoserine modification. Thr-500 carries the post-translational modification Phosphothreonine. A compositionally biased stretch (low complexity) spans 641–652 (QDQQQYQQQQQE).

The protein belongs to the protein kinase superfamily. Ser/Thr protein kinase family.

The protein resides in the cytoplasm. It localises to the cell cortex. Its function is as follows. May play a role in subcellular trafficking between the endoplasmic reticulum and Golgi apparatus. This Drosophila pseudoobscura pseudoobscura (Fruit fly) protein is Nuclear receptor-binding protein homolog.